Here is a 341-residue protein sequence, read N- to C-terminus: Large ribosomal subunit protein uL3 (341 aa).

Disordered regions lie at residues 1–31 and 234–261; these read MGHR…SPRS and HRKG…GQMG.

The protein belongs to the universal ribosomal protein uL3 family. In terms of assembly, part of the 50S ribosomal subunit. Forms a cluster with proteins L14 and L24e.

One of the primary rRNA binding proteins, it binds directly near the 3'-end of the 23S rRNA, where it nucleates assembly of the 50S subunit. The sequence is that of Large ribosomal subunit protein uL3 from Metallosphaera sedula (strain ATCC 51363 / DSM 5348 / JCM 9185 / NBRC 15509 / TH2).